Consider the following 218-residue polypeptide: Large ribosomal subunit protein uL2c (218 aa).

The interval 165-192 (GVVKNPVDHPHGGGEGRSPIGRSHPVTP) is disordered.

This sequence belongs to the universal ribosomal protein uL2 family. In terms of assembly, part of the 50S ribosomal subunit.

It is found in the plastid. The protein localises to the chloroplast. The protein is Large ribosomal subunit protein uL2c (rpl2) of Bigelowiella natans (Pedinomonas minutissima).